We begin with the raw amino-acid sequence, 374 residues long: Histidinol-phosphate aminotransferase (374 aa).

Lys215 is modified (N6-(pyridoxal phosphate)lysine).

Belongs to the class-II pyridoxal-phosphate-dependent aminotransferase family. Histidinol-phosphate aminotransferase subfamily. As to quaternary structure, homodimer. The cofactor is pyridoxal 5'-phosphate.

The catalysed reaction is L-histidinol phosphate + 2-oxoglutarate = 3-(imidazol-4-yl)-2-oxopropyl phosphate + L-glutamate. The protein operates within amino-acid biosynthesis; L-histidine biosynthesis; L-histidine from 5-phospho-alpha-D-ribose 1-diphosphate: step 7/9. In Yersinia enterocolitica serotype O:8 / biotype 1B (strain NCTC 13174 / 8081), this protein is Histidinol-phosphate aminotransferase.